A 301-amino-acid chain; its full sequence is Acetyl-coenzyme A carboxylase carboxyl transferase subunit beta (301 aa).

A CoA carboxyltransferase N-terminal domain is found at 25–294; that stretch reads LWIKCPETGE…SAANDVTRGA (270 aa).

This sequence belongs to the AccD/PCCB family. As to quaternary structure, acetyl-CoA carboxylase is a heterohexamer composed of biotin carboxyl carrier protein (AccB), biotin carboxylase (AccC) and two subunits each of ACCase subunit alpha (AccA) and ACCase subunit beta (AccD).

Its subcellular location is the cytoplasm. It catalyses the reaction N(6)-carboxybiotinyl-L-lysyl-[protein] + acetyl-CoA = N(6)-biotinyl-L-lysyl-[protein] + malonyl-CoA. It functions in the pathway lipid metabolism; malonyl-CoA biosynthesis; malonyl-CoA from acetyl-CoA: step 1/1. In terms of biological role, component of the acetyl coenzyme A carboxylase (ACC) complex. Biotin carboxylase (BC) catalyzes the carboxylation of biotin on its carrier protein (BCCP) and then the CO(2) group is transferred by the transcarboxylase to acetyl-CoA to form malonyl-CoA. This Rhizobium etli (strain ATCC 51251 / DSM 11541 / JCM 21823 / NBRC 15573 / CFN 42) protein is Acetyl-coenzyme A carboxylase carboxyl transferase subunit beta.